Consider the following 127-residue polypeptide: Aspartate 1-decarboxylase (127 aa).

S25 acts as the Schiff-base intermediate with substrate; via pyruvic acid in catalysis. A Pyruvic acid (Ser) modification is found at S25. Substrate is bound at residue T57. Y58 acts as the Proton donor in catalysis. Substrate is bound at residue 73-75 (GAA).

It belongs to the PanD family. In terms of assembly, heterooctamer of four alpha and four beta subunits. Requires pyruvate as cofactor. Post-translationally, is synthesized initially as an inactive proenzyme, which is activated by self-cleavage at a specific serine bond to produce a beta-subunit with a hydroxyl group at its C-terminus and an alpha-subunit with a pyruvoyl group at its N-terminus.

It localises to the cytoplasm. It catalyses the reaction L-aspartate + H(+) = beta-alanine + CO2. It participates in cofactor biosynthesis; (R)-pantothenate biosynthesis; beta-alanine from L-aspartate: step 1/1. Its function is as follows. Catalyzes the pyruvoyl-dependent decarboxylation of aspartate to produce beta-alanine. This Clostridium botulinum (strain Okra / Type B1) protein is Aspartate 1-decarboxylase.